The sequence spans 715 residues: Polyribonucleotide nucleotidyltransferase (715 aa).

The Mg(2+) site is built by Asp488 and Asp494. The KH domain occupies Pro555–Ile614. In terms of domain architecture, S1 motif spans Gly624–Lys692.

It belongs to the polyribonucleotide nucleotidyltransferase family. The cofactor is Mg(2+).

The protein localises to the cytoplasm. It catalyses the reaction RNA(n+1) + phosphate = RNA(n) + a ribonucleoside 5'-diphosphate. Involved in mRNA degradation. Catalyzes the phosphorolysis of single-stranded polyribonucleotides processively in the 3'- to 5'-direction. The polypeptide is Polyribonucleotide nucleotidyltransferase (Mesorhizobium japonicum (strain LMG 29417 / CECT 9101 / MAFF 303099) (Mesorhizobium loti (strain MAFF 303099))).